The following is a 79-amino-acid chain: MTLRNPHLGIDNDELMRRVEALINASKNRYRITVQVANRAKRRRYDDPNDVEEGWMKPIRRAIIEMSDELTEPEIIGDE.

Belongs to the RNA polymerase subunit omega family. As to quaternary structure, in cyanobacteria the RNAP catalytic core is composed of 2 alpha, 1 beta, 1 beta', 1 gamma and 1 omega subunit. When a sigma factor is associated with the core the holoenzyme is formed, which can initiate transcription.

The catalysed reaction is RNA(n) + a ribonucleoside 5'-triphosphate = RNA(n+1) + diphosphate. Promotes RNA polymerase assembly. Latches the N- and C-terminal regions of the beta' subunit thereby facilitating its interaction with the beta and alpha subunits. The sequence is that of DNA-directed RNA polymerase subunit omega from Synechococcus sp. (strain JA-3-3Ab) (Cyanobacteria bacterium Yellowstone A-Prime).